A 495-amino-acid polypeptide reads, in one-letter code: UDP-glycosyltransferase 73C12 (495 aa).

The active-site Proton acceptor is the His24. His24 provides a ligand contact to an anthocyanidin. The active-site Charge relay is Asp129. UDP-alpha-D-glucose is bound by residues Ala356, Gln358, His373, Trp376, Asn377, Ser378, and Glu381. An anthocyanidin is bound at residue Ala396. 2 residues coordinate UDP-alpha-D-glucose: Asp397 and Gln398.

It belongs to the UDP-glycosyltransferase family.

The enzyme catalyses oleanolate + UDP-alpha-D-glucose = oleanolate 3-O-beta-D-glucoside + UDP + H(+). Catalyzes the transfer of a glucose (Glc) moiety from UDP-Glc to the C-3 position of the oleanane sapogenins oleanolate and hederagenin, and to the C-28 carboxylic group of the lupane sapogenin betulinate. The monoglucosylated hederagenin 3-O-beta-D-glucoside is a feeding deterrent of the yellow-striped flea beetle (Phyllotreta nemorum). The polypeptide is UDP-glycosyltransferase 73C12 (Barbarea vulgaris (Yellow rocket)).